The sequence spans 742 residues: Dynein axonemal intermediate chain 4 (742 aa).

4 WD repeats span residues 462 to 502, 511 to 559, 631 to 671, and 674 to 713; these read HCEC…DFPV, KHTS…DCND, GHKG…PILT, and NTTNAVYDIMWSPSSALMFGAVSENRVEIWDLGVSIIDPV.

In terms of assembly, part of the multisubunit axonemal dynein complex formed at least of two heavy chains and a number of intermediate and light chains. Associated with axonemal dynein subunits such as, DNAH2, DNAI3, and DYNLT1.

The protein resides in the cytoplasm. The protein localises to the cytoskeleton. It localises to the flagellum axoneme. Its subcellular location is the cilium axoneme. It is found in the dynein axonemal particle. Its function is as follows. Plays a critical role in the assembly of axonemal dynein complex, thereby playing a role in ciliary motility. This chain is Dynein axonemal intermediate chain 4, found in Xenopus laevis (African clawed frog).